We begin with the raw amino-acid sequence, 365 residues long: Fructose-1,6-bisphosphatase class 1 2 (365 aa).

The Mg(2+) site is built by E100, D122, L124, and D125. Substrate is bound by residues 125–128 (DGSS) and N221. E293 contributes to the Mg(2+) binding site.

The protein belongs to the FBPase class 1 family. Homotetramer. The cofactor is Mg(2+).

It is found in the cytoplasm. The enzyme catalyses beta-D-fructose 1,6-bisphosphate + H2O = beta-D-fructose 6-phosphate + phosphate. The protein operates within carbohydrate biosynthesis; gluconeogenesis. The polypeptide is Fructose-1,6-bisphosphatase class 1 2 (Cupriavidus metallidurans (strain ATCC 43123 / DSM 2839 / NBRC 102507 / CH34) (Ralstonia metallidurans)).